A 414-amino-acid polypeptide reads, in one-letter code: Dual-specificity RNA methyltransferase RlmN (414 aa).

The span at Met-1–Asp-13 shows a compositional bias: polar residues. A disordered region spans residues Met-1 to Gln-22. Glu-124 acts as the Proton acceptor in catalysis. Residues Thr-134 to Asp-377 enclose the Radical SAM core domain. Cys-141 and Cys-382 are disulfide-bonded. [4Fe-4S] cluster is bound by residues Cys-148, Cys-152, and Cys-155. S-adenosyl-L-methionine-binding positions include Gly-204–Glu-205, Ser-236, Ser-258–His-260, and Asn-339. Cys-382 acts as the S-methylcysteine intermediate in catalysis.

It belongs to the radical SAM superfamily. RlmN family. [4Fe-4S] cluster serves as cofactor.

It localises to the cytoplasm. It catalyses the reaction adenosine(2503) in 23S rRNA + 2 reduced [2Fe-2S]-[ferredoxin] + 2 S-adenosyl-L-methionine = 2-methyladenosine(2503) in 23S rRNA + 5'-deoxyadenosine + L-methionine + 2 oxidized [2Fe-2S]-[ferredoxin] + S-adenosyl-L-homocysteine. The catalysed reaction is adenosine(37) in tRNA + 2 reduced [2Fe-2S]-[ferredoxin] + 2 S-adenosyl-L-methionine = 2-methyladenosine(37) in tRNA + 5'-deoxyadenosine + L-methionine + 2 oxidized [2Fe-2S]-[ferredoxin] + S-adenosyl-L-homocysteine. Its function is as follows. Specifically methylates position 2 of adenine 2503 in 23S rRNA and position 2 of adenine 37 in tRNAs. m2A2503 modification seems to play a crucial role in the proofreading step occurring at the peptidyl transferase center and thus would serve to optimize ribosomal fidelity. The protein is Dual-specificity RNA methyltransferase RlmN of Acinetobacter baylyi (strain ATCC 33305 / BD413 / ADP1).